A 144-amino-acid polypeptide reads, in one-letter code: uncharacterized protein (144 aa).

The segment at 1–24 (MGKVIQFPFGEEPEKKEEKELKTE) is disordered. Positions 12 to 24 (EPEKKEEKELKTE) are enriched in basic and acidic residues.

This is an uncharacterized protein from Aquifex aeolicus (strain VF5).